Reading from the N-terminus, the 546-residue chain is Phosphomethylpyrimidine synthase (546 aa).

Residues 1–19 (MSTPSSRSQAPETVTTGPI) are compositionally biased toward polar residues. The interval 1–20 (MSTPSSRSQAPETVTTGPIQ) is disordered. Substrate contacts are provided by residues asparagine 146, methionine 175, tyrosine 204, histidine 240, 260–262 (SRG), 301–304 (DGLR), and glutamate 340. A Zn(2+)-binding site is contributed by histidine 344. Substrate is bound at residue tyrosine 367. Histidine 408 contributes to the Zn(2+) binding site. [4Fe-4S] cluster-binding residues include cysteine 488, cysteine 491, and cysteine 496.

Belongs to the ThiC family. Requires [4Fe-4S] cluster as cofactor.

The enzyme catalyses 5-amino-1-(5-phospho-beta-D-ribosyl)imidazole + S-adenosyl-L-methionine = 4-amino-2-methyl-5-(phosphooxymethyl)pyrimidine + CO + 5'-deoxyadenosine + formate + L-methionine + 3 H(+). Its pathway is cofactor biosynthesis; thiamine diphosphate biosynthesis. Functionally, catalyzes the synthesis of the hydroxymethylpyrimidine phosphate (HMP-P) moiety of thiamine from aminoimidazole ribotide (AIR) in a radical S-adenosyl-L-methionine (SAM)-dependent reaction. The polypeptide is Phosphomethylpyrimidine synthase (Mycobacteroides abscessus (strain ATCC 19977 / DSM 44196 / CCUG 20993 / CIP 104536 / JCM 13569 / NCTC 13031 / TMC 1543 / L948) (Mycobacterium abscessus)).